The following is a 380-amino-acid chain: Alpha-glucoside transport system permease protein AglG (380 aa).

Helical transmembrane passes span 13–33, 179–199, 202–222, 239–259, 288–308, and 344–364; these read VHLS…GLLI, VIPI…PFPG, VLLA…LIPL, TYMG…IYLL, IILP…FLWT, and EILT…FFAL. Residues 167–364 form the ABC transmembrane type-1 domain; it reads FLNSLTVAVP…VVPLIVFFAL (198 aa).

Belongs to the binding-protein-dependent transport system permease family. MalFG subfamily.

The protein resides in the cell inner membrane. Part of the binding-protein-dependent transport system for alpha-glucosides such as sucrose, maltose and trehalose. Probably responsible for the translocation of the substrate across the membrane. This Rhizobium meliloti (strain 1021) (Ensifer meliloti) protein is Alpha-glucoside transport system permease protein AglG (aglG).